The chain runs to 380 residues: Beta-1,3-N-acetylglucosaminyltransferase lunatic fringe (380 aa).

At 1–8 (MLKRCGRR) the chain is on the cytoplasmic side. A helical; Signal-anchor for type II membrane protein membrane pass occupies residues 9 to 29 (LLLALAGALLACLLVLTADPP). At 30–380 (PPPVPAERGR…TSWCPRSAIF (351 aa)) the chain is on the lumenal side. A disordered region spans residues 85–110 (SRRDVGPPPGGAPRPADGPPRPLAEP). A compositionally biased stretch (pro residues) spans 90–107 (GPPPGGAPRPADGPPRPL). Arg-130 is a substrate binding site. An N-linked (GlcNAc...) asparagine glycan is attached at Asn-168. Cystine bridges form between Cys-169–Cys-180 and Cys-198–Cys-261. Asp-202 is a binding site for substrate. Mn(2+) is bound at residue Asp-203. Asp-291 is an active-site residue. Position 315 (His-315) interacts with Mn(2+). A disulfide bond links Cys-365 and Cys-374.

This sequence belongs to the glycosyltransferase 31 family. Mn(2+) is required as a cofactor. Co(2+) serves as cofactor. A soluble form may be derived from the membrane form by proteolytic processing.

The protein localises to the golgi apparatus. The protein resides in the golgi apparatus membrane. It carries out the reaction 3-O-(alpha-L-fucosyl)-L-threonyl-[EGF-like domain protein] + UDP-N-acetyl-alpha-D-glucosamine = 3-O-(N-acetyl-beta-D-glucosaminyl-(1-&gt;3)-alpha-L-fucosyl)-L-threonyl-[EGF-like domain protein] + UDP + H(+). The enzyme catalyses 3-O-(alpha-L-fucosyl)-L-seryl-[EGF-like domain protein] + UDP-N-acetyl-alpha-D-glucosamine = 3-O-(N-acetyl-beta-D-glucosaminyl-(1-&gt;3)-alpha-L-fucosyl)-L-seryl-[EGF-like domain protein] + UDP + H(+). Functionally, glycosyltransferase that initiates the elongation of O-linked fucose residues attached to EGF-like repeats in the extracellular domain of Notch molecules. Modulates NOTCH1 activity by modifying O-fucose residues at specific EGF-like domains resulting in inhibition of NOTCH1 activation by JAG1 and enhancement of NOTCH1 activation by DLL1 via an increase in its binding to DLL1. Decreases the binding of JAG1 to NOTCH2 but not that of DLL1. Essential mediator of somite segmentation and patterning. The protein is Beta-1,3-N-acetylglucosaminyltransferase lunatic fringe (LFNG) of Bos taurus (Bovine).